The primary structure comprises 751 residues: Photosystem I P700 chlorophyll a apoprotein A1 (751 aa).

A run of 8 helical transmembrane segments spans residues 73–96 (VFSA…FHGA), 159–182 (LYST…FHFH), 198–222 (LNHH…HVSL), 294–312 (TAHH…GHMY), 349–372 (WHAQ…HHQY), 388–414 (LSLF…IFMI), 436–458 (AIIS…LYIH), and 533–551 (FLVH…LILL). Cys-575 and Cys-584 together coordinate [4Fe-4S] cluster. 2 helical membrane-spanning segments follow: residues 591 to 612 (HVFL…HFSW) and 665 to 687 (LSAY…MFLF). Chlorophyll a' is bound at residue His-676. Met-684 and Tyr-692 together coordinate chlorophyll a. Trp-693 contributes to the phylloquinone binding site. The helical transmembrane segment at 725 to 745 (AVGVAHYLLGGIATTWSFFLA) threads the bilayer.

This sequence belongs to the PsaA/PsaB family. The PsaA/B heterodimer binds the P700 chlorophyll special pair and subsequent electron acceptors. PSI consists of a core antenna complex that captures photons, and an electron transfer chain that converts photonic excitation into a charge separation. The eukaryotic PSI reaction center is composed of at least 11 subunits. The cofactor is P700 is a chlorophyll a/chlorophyll a' dimer, A0 is one or more chlorophyll a, A1 is one or both phylloquinones and FX is a shared 4Fe-4S iron-sulfur center..

It localises to the plastid. Its subcellular location is the chloroplast thylakoid membrane. The enzyme catalyses reduced [plastocyanin] + hnu + oxidized [2Fe-2S]-[ferredoxin] = oxidized [plastocyanin] + reduced [2Fe-2S]-[ferredoxin]. Functionally, psaA and PsaB bind P700, the primary electron donor of photosystem I (PSI), as well as the electron acceptors A0, A1 and FX. PSI is a plastocyanin/cytochrome c6-ferredoxin oxidoreductase, converting photonic excitation into a charge separation, which transfers an electron from the donor P700 chlorophyll pair to the spectroscopically characterized acceptors A0, A1, FX, FA and FB in turn. Oxidized P700 is reduced on the lumenal side of the thylakoid membrane by plastocyanin or cytochrome c6. This is Photosystem I P700 chlorophyll a apoprotein A1 from Tupiella akineta (Green alga).